We begin with the raw amino-acid sequence, 177 residues long: uncharacterized protein (177 aa).

4 helical membrane-spanning segments follow: residues 4–24, 33–53, 80–100, and 115–135; these read IIIL…GFIL, ILSI…LHWI, IAFI…GSFL, and MLGA…LLYV.

Its subcellular location is the cell membrane. This is an uncharacterized protein from Bacillus subtilis (strain 168).